Here is a 139-residue protein sequence, read N- to C-terminus: Cystatin cpi-1 (139 aa).

An N-terminal signal peptide occupies residues 1–19 (MRFILLIALVFAVLDGINC). N-linked (GlcNAc...) asparagine glycosylation occurs at Asn-29. The Secondary area of contact motif lies at 65-69 (QVVAG). Cys-83 and Cys-99 are oxidised to a cystine.

The protein belongs to the cystatin family.

In terms of biological role, cysteine protease inhibitor which inhibits members of the peptidase C1 family. Does not inhibit asparaginyl endopeptidase. May play a protective role against exogenous cysteine proteases derived from soil bacteria or fungi, or rotting fruits and vegetation. The polypeptide is Cystatin cpi-1 (Caenorhabditis elegans).